The primary structure comprises 501 residues: MEAASAALRRCLLLIVLVAAATLLPGAKALQCFCHLCTKDNFTCETDGLCFVSVTETTDKVIHNSMCIAEIDLIPRDRPFVCAPSSKTGAVTYCCNQDHCNKIELPTTGPFSEKQSAGLGPVELAAVIAGPVCFVCIALMLMVYICHNRTVIHHRVPNEEDPSLDRPFISEGTTLKDLIYDMTTSGSGSGLPLLVQRTIARTIVLQESIGKGRFGEVWRGKWRGEEVAVKIFSSREERSWFREAEIYQTVMLRHENILGFIAADNKDNGTWTQLWLVSDYHEHGSLFDYLNRYTVTVEGMIKLALSTASGLAHLHMEIVGTQGKPAIAHRDLKSKNILVKKNGTCCIADLGLAVRHDSATDTIDIAPNHRVGTKRYMAPEVLDDSINMKHFESFKRADIYAMGLVFWEIARRCSIGGIHEDYQLPYYDLVPSDPSVEEMRKVVCEQKLRPNIPNRWQSCEALRVMAKIMRECWYANGAARLTALRIKKTLSQLSQQEGIKM.

An N-terminal signal peptide occupies residues 1–29; that stretch reads MEAASAALRRCLLLIVLVAAATLLPGAKA. At 30 to 124 the chain is on the extracellular side; that stretch reads LQCFCHLCTK…QSAGLGPVEL (95 aa). 5 cysteine pairs are disulfide-bonded: C32/C50, C34/C37, C44/C67, C82/C94, and C95/C100. N-linked (GlcNAc...) asparagine glycosylation occurs at N41. Residues 125–145 traverse the membrane as a helical segment; sequence AAVIAGPVCFVCIALMLMVYI. The Cytoplasmic segment spans residues 146–501; the sequence is CHNRTVIHHR…QLSQQEGIKM (356 aa). S163 is subject to Phosphoserine. One can recognise a GS domain in the interval 173–202; the sequence is TTLKDLIYDMTTSGSGSGLPLLVQRTIART. Phosphothreonine; by TGFBR2 is present on residues T183 and T184. Phosphoserine; by TGFBR2 is present on residues S185, S187, and S189. The FKBP1A-binding motif lies at 191-192; it reads LP. A Protein kinase domain is found at 203–493; it reads IVLQESIGKG…LRIKKTLSQL (291 aa). ATP-binding positions include 209–217 and K230; that span reads IGKGRFGEV. The active-site Proton acceptor is the D331. K389 participates in a covalent cross-link: Glycyl lysine isopeptide (Lys-Gly) (interchain with G-Cter in SUMO).

This sequence belongs to the protein kinase superfamily. TKL Ser/Thr protein kinase family. TGFB receptor subfamily. Homodimer; in the endoplasmic reticulum but also at the cell membrane. Heterohexamer; TGFB1, TGFB2 and TGFB3 homodimeric ligands assemble a functional receptor composed of two TGFBR1 and TGFBR2 heterodimers to form a ligand-receptor heterohexamer. The respective affinity of TGBRB1 and TGFBR2 for the ligands may modulate the kinetics of assembly of the receptor and may explain the different biological activities of TGFB1, TGFB2 and TGFB3. Component of a complex composed of TSC22D1 (via N-terminus), TGFBR1 and TGFBR2; the interaction between TSC22D1 and TGFBR1 is inhibited by SMAD7 and promoted by TGFB1. Interacts with CD109; inhibits TGF-beta receptor activation in keratinocytes. Interacts with RBPMS. Interacts with SMAD2, SMAD3 and ZFYVE9; ZFYVE9 recruits SMAD2 and SMAD3 to the TGF-beta receptor. Interacts with TRAF6 and MAP3K7; induces MAP3K7 activation by TRAF6. Interacts with PARD6A; involved in TGF-beta induced epithelial to mesenchymal transition. Interacts with NEDD4L. Interacts with SMAD7, SMURF1 and SMURF2; SMAD7 recruits NEDD4L, SMURF1 and SMURF2 to the TGF-beta receptor. Interacts with USP15 and VPS39. Interacts (unphosphorylated) with FKBP1A; prevents TGFBR1 phosphorylation by TGFBR2 and stabilizes it in the inactive conformation. Interacts with SDCBP (via C-terminus). Interacts with CAV1 and this interaction is impaired in the presence of SDCBP. Interacts with APPL1; interaction is TGF beta dependent; mediates trafficking of the TGFBR1 from the endosomes to the nucleus via microtubules in a TRAF6-dependent manner. Interacts with GPR50; this interaction promotes the constitutive activation of SMAD signaling pathway. It depends on Mg(2+) as a cofactor. Requires Mn(2+) as cofactor. Post-translationally, phosphorylated at basal levels in the absence of ligand. Activated upon phosphorylation by TGFBR2, mainly in the GS domain. Phosphorylation in the GS domain abrogates FKBP1A-binding. In terms of processing, N-Glycosylated. Ubiquitinated; undergoes ubiquitination catalyzed by several E3 ubiquitin ligases including SMURF1, SMURF2 and NEDD4L2. Results in the proteasomal and/or lysosomal degradation of the receptor thereby negatively regulating its activity. Deubiquitinated by USP15, leading to stabilization of the protein and enhanced TGF-beta signal. Its ubiquitination and proteasome-mediated degradation is negatively regulated by SDCBP. As to expression, urogenital ridge, testis, ovary, brain and lungs.

The protein localises to the cell membrane. The protein resides in the cell junction. It is found in the tight junction. It localises to the membrane raft. Its subcellular location is the cell surface. The catalysed reaction is L-threonyl-[receptor-protein] + ATP = O-phospho-L-threonyl-[receptor-protein] + ADP + H(+). It catalyses the reaction L-seryl-[receptor-protein] + ATP = O-phospho-L-seryl-[receptor-protein] + ADP + H(+). Its activity is regulated as follows. Kept in an inactive conformation by FKBP1A preventing receptor activation in absence of ligand. CD109 is another inhibitor of the receptor. Functionally, transmembrane serine/threonine kinase forming with the TGF-beta type II serine/threonine kinase receptor, TGFBR2, the non-promiscuous receptor for the TGF-beta cytokines TGFB1, TGFB2 and TGFB3. Transduces the TGFB1, TGFB2 and TGFB3 signal from the cell surface to the cytoplasm and is thus regulating a plethora of physiological and pathological processes including cell cycle arrest in epithelial and hematopoietic cells, control of mesenchymal cell proliferation and differentiation, wound healing, extracellular matrix production, immunosuppression and carcinogenesis. The formation of the receptor complex composed of 2 TGFBR1 and 2 TGFBR2 molecules symmetrically bound to the cytokine dimer results in the phosphorylation and the activation of TGFBR1 by the constitutively active TGFBR2. Activated TGFBR1 phosphorylates SMAD2 which dissociates from the receptor and interacts with SMAD4. The SMAD2-SMAD4 complex is subsequently translocated to the nucleus where it modulates the transcription of the TGF-beta-regulated genes. This constitutes the canonical SMAD-dependent TGF-beta signaling cascade. Also involved in non-canonical, SMAD-independent TGF-beta signaling pathways. For instance, TGFBR1 induces TRAF6 autoubiquitination which in turn results in MAP3K7 ubiquitination and activation to trigger apoptosis. Also regulates epithelial to mesenchymal transition through a SMAD-independent signaling pathway through PARD6A phosphorylation and activation. The sequence is that of TGF-beta receptor type-1 (Tgfbr1) from Rattus norvegicus (Rat).